Consider the following 90-residue polypeptide: Small ribosomal subunit protein bS16 (90 aa).

It belongs to the bacterial ribosomal protein bS16 family.

In Listeria innocua serovar 6a (strain ATCC BAA-680 / CLIP 11262), this protein is Small ribosomal subunit protein bS16.